The primary structure comprises 336 residues: MMTLNLQTMSSNDMLNFGKKPAYTTSNGSMYIGDSLELLESFPDESISLVMTSPPFALQRKKEYGNLEQHEYVDWFLSFAKVVNKKLKPDGSFVVDFGGAYMKGVPARSIYNFRVLIRMIDEVGFFLAEDFYWFNPSKLPSPIEWVNKRKIRVKDAVNTVWWFSKTEWPKSDITKVLAPYSDRMKKLIEDPDKFYTPKTRPSGHDIGKSFSKDNGGSIPPNLLQISNSESNGQYLANCKLMGIKAHPARFPAKLPEFFIRMLTEPDDLVVDIFGGSNTTGLVAERESRKWISFEMKPEYVAASAFRFLDNNISEEKITDIYNRILNGESLDLNSII.

A run of 2 repeats spans residues 11-113 (SNDM…IYNF) and 181-293 (SDRM…WISF). Residues 196-215 (TPKTRPSGHDIGKSFSKDNG) form a disordered region. A compositionally biased stretch (basic and acidic residues) spans 202 to 211 (SGHDIGKSFS).

Belongs to the N(4)/N(6)-methyltransferase family. N(4) subfamily. In terms of assembly, monomer.

The enzyme catalyses a 2'-deoxycytidine in DNA + S-adenosyl-L-methionine = an N(4)-methyl-2'-deoxycytidine in DNA + S-adenosyl-L-homocysteine + H(+). Its function is as follows. A beta subtype methylase, recognizes the double-stranded sequence 5'-CAGCTG-3', methylates C-4 on both strands, and protects the DNA from cleavage by the PvuII endonuclease. The protein is Type II methyltransferase M.PvuII of Proteus hauseri.